The primary structure comprises 325 residues: Acetyl-coenzyme A carboxylase carboxyl transferase subunit alpha (325 aa).

The region spanning 35-292 (EIEKLEARLA…DKVLKRSLKQ (258 aa)) is the CoA carboxyltransferase C-terminal domain.

It belongs to the AccA family. Acetyl-CoA carboxylase is a heterohexamer composed of biotin carboxyl carrier protein (AccB), biotin carboxylase (AccC) and two subunits each of ACCase subunit alpha (AccA) and ACCase subunit beta (AccD).

It is found in the cytoplasm. It carries out the reaction N(6)-carboxybiotinyl-L-lysyl-[protein] + acetyl-CoA = N(6)-biotinyl-L-lysyl-[protein] + malonyl-CoA. It participates in lipid metabolism; malonyl-CoA biosynthesis; malonyl-CoA from acetyl-CoA: step 1/1. Functionally, component of the acetyl coenzyme A carboxylase (ACC) complex. First, biotin carboxylase catalyzes the carboxylation of biotin on its carrier protein (BCCP) and then the CO(2) group is transferred by the carboxyltransferase to acetyl-CoA to form malonyl-CoA. The sequence is that of Acetyl-coenzyme A carboxylase carboxyl transferase subunit alpha from Geobacillus sp. (strain WCH70).